A 420-amino-acid polypeptide reads, in one-letter code: WD repeat-containing protein jip5 (420 aa).

6 WD repeats span residues 9-48 (PLSA…VDSD), 72-111 (RHKG…VENK), 117-158 (DKNG…SKVS), 221-262 (VSSV…DQDE), 271-314 (GGGE…VVSE), and 318-355 (DETE…GDGV). The tract at residues 39–63 (RLPSDEVDSDDDGASTSSSRTGRGH) is disordered. A disordered region spans residues 350–420 (DSGDGVNGNE…QAVMAFHDLD (71 aa)). The segment covering 368–387 (DDSDEDSDDGDDDDDSGDSD) has biased composition (acidic residues). Residues 394 to 406 (DARKKRKKGKTPK) show a composition bias toward basic residues.

The protein belongs to the WD repeat WDR55 family.

It is found in the nucleus. It localises to the nucleolus. The protein is WD repeat-containing protein jip5 (jip5) of Aspergillus terreus (strain NIH 2624 / FGSC A1156).